A 180-amino-acid polypeptide reads, in one-letter code: Shikimate kinase (180 aa).

An ATP-binding site is contributed by 14–19 (GAGKTC). A Mg(2+)-binding site is contributed by Thr18. Substrate-binding residues include Asp36, Arg60, and Gly82. Arg120 contacts ATP. A substrate-binding site is contributed by Arg139.

Belongs to the shikimate kinase family. In terms of assembly, monomer. Mg(2+) is required as a cofactor.

The protein resides in the cytoplasm. The enzyme catalyses shikimate + ATP = 3-phosphoshikimate + ADP + H(+). It functions in the pathway metabolic intermediate biosynthesis; chorismate biosynthesis; chorismate from D-erythrose 4-phosphate and phosphoenolpyruvate: step 5/7. Catalyzes the specific phosphorylation of the 3-hydroxyl group of shikimic acid using ATP as a cosubstrate. The chain is Shikimate kinase from Stenotrophomonas maltophilia (strain R551-3).